The sequence spans 125 residues: Histone H1-like protein HC1 (125 aa).

Belongs to the histone H1/H5 family. HCT subfamily.

Its function is as follows. Might have a role analogous to that of eukaryotic histone proteins. The sequence is that of Histone H1-like protein HC1 (hctA) from Chlamydia muridarum (strain MoPn / Nigg).